Here is a 309-residue protein sequence, read N- to C-terminus: Olfactory receptor 5AC2 (309 aa).

The Extracellular portion of the chain corresponds to 1–27; that stretch reads MDISEGNKTLVTEFVLTGLTDRPWLHV. A glycan (N-linked (GlcNAc...) asparagine) is linked at N7. The chain crosses the membrane as a helical span at residues 28–48; it reads LFFVVFLVVYLITMVGNLGLI. The Cytoplasmic segment spans residues 49 to 56; sequence VLIWNDPH. Residues 57–77 form a helical membrane-spanning segment; sequence LHMPMYLFLGGLAFSDACTST. Topologically, residues 78 to 101 are extracellular; the sequence is SITPRMLVNFLDKTAMISLAECIT. Residues C99 and C191 are joined by a disulfide bond. Residues 102–122 form a helical membrane-spanning segment; the sequence is QFYFFASSATTECFLLVMMAY. Residues 123–135 lie on the Cytoplasmic side of the membrane; the sequence is DRYVAICNPLLYP. A helical transmembrane segment spans residues 136–156; the sequence is VMMSNKLSAQLLSISYVIGFL. Over 157 to 198 the chain is Extracellular; the sequence is HPLVHVSLLLRLTFCRFNIIHYFYCEILQLFKISCNGPSINA. A helical membrane pass occupies residues 199–219; that stretch reads LMIFIFGAFIQIPTLMTIIIS. Residues 220 to 239 are Cytoplasmic-facing; sequence YTRVLFDILKKKSEKGRSKA. Residues 240–260 form a helical membrane-spanning segment; that stretch reads FSTCGAHLLSVSLYYGTLIFM. Topologically, residues 261–273 are extracellular; the sequence is YVRPASGLAEDQD. Residues 274–294 form a helical membrane-spanning segment; sequence KVYSLFYTIIIPLLNPFIYSL. At 295 to 309 the chain is on the cytoplasmic side; sequence RNKKVMHALRRVIRK.

It belongs to the G-protein coupled receptor 1 family.

The protein localises to the cell membrane. In terms of biological role, odorant receptor. This Homo sapiens (Human) protein is Olfactory receptor 5AC2 (OR5AC2).